Reading from the N-terminus, the 104-residue chain is Large ribosomal subunit protein uL24 (104 aa).

Belongs to the universal ribosomal protein uL24 family. As to quaternary structure, part of the 50S ribosomal subunit.

Functionally, one of two assembly initiator proteins, it binds directly to the 5'-end of the 23S rRNA, where it nucleates assembly of the 50S subunit. One of the proteins that surrounds the polypeptide exit tunnel on the outside of the subunit. In Pectobacterium carotovorum subsp. carotovorum (strain PC1), this protein is Large ribosomal subunit protein uL24.